A 259-amino-acid polypeptide reads, in one-letter code: UPF0246 protein PA14_18590 (259 aa).

It belongs to the UPF0246 family.

The sequence is that of UPF0246 protein PA14_18590 from Pseudomonas aeruginosa (strain UCBPP-PA14).